The following is a 140-amino-acid chain: Nucleoside diphosphate kinase (140 aa).

ATP-binding residues include Lys-11, Phe-59, Arg-87, Thr-93, Arg-104, and Asn-114. His-117 serves as the catalytic Pros-phosphohistidine intermediate.

The protein belongs to the NDK family. In terms of assembly, homotetramer. Requires Mg(2+) as cofactor.

Its subcellular location is the cytoplasm. The catalysed reaction is a 2'-deoxyribonucleoside 5'-diphosphate + ATP = a 2'-deoxyribonucleoside 5'-triphosphate + ADP. It carries out the reaction a ribonucleoside 5'-diphosphate + ATP = a ribonucleoside 5'-triphosphate + ADP. In terms of biological role, major role in the synthesis of nucleoside triphosphates other than ATP. The ATP gamma phosphate is transferred to the NDP beta phosphate via a ping-pong mechanism, using a phosphorylated active-site intermediate. The protein is Nucleoside diphosphate kinase of Rhizobium meliloti (strain 1021) (Ensifer meliloti).